Here is a 119-residue protein sequence, read N- to C-terminus: Ribonuclease P protein component (119 aa).

It belongs to the RnpA family. Consists of a catalytic RNA component (M1 or rnpB) and a protein subunit.

The catalysed reaction is Endonucleolytic cleavage of RNA, removing 5'-extranucleotides from tRNA precursor.. RNaseP catalyzes the removal of the 5'-leader sequence from pre-tRNA to produce the mature 5'-terminus. It can also cleave other RNA substrates such as 4.5S RNA. The protein component plays an auxiliary but essential role in vivo by binding to the 5'-leader sequence and broadening the substrate specificity of the ribozyme. The polypeptide is Ribonuclease P protein component (Aromatoleum aromaticum (strain DSM 19018 / LMG 30748 / EbN1) (Azoarcus sp. (strain EbN1))).